A 330-amino-acid chain; its full sequence is Membrane progestin receptor gamma (330 aa).

Over 1–51 (MLSLKLPRLFRIDQVPQVFHEQGILFGYRHPQSSATACILSLFQMTNETLN) the chain is Cytoplasmic. The helical transmembrane segment at 52–72 (IWTHLLPFWFFVWRFMTALYV) threads the bilayer. The Extracellular portion of the chain corresponds to 73 to 81 (TDIQNDSYS). A helical membrane pass occupies residues 82–101 (WPMLVYMCTSCVYPLASSCA). Topologically, residues 102–113 (HTFSSMSKNARH) are cytoplasmic. Residues 114–134 (ICYFLDYGAVNLFSLGSAIAY) form a helical membrane-spanning segment. The Extracellular portion of the chain corresponds to 135–141 (SAYTFPD). The chain crosses the membrane as a helical span at residues 142–162 (ALVCSTFHECYVALAVLNTIL). The Cytoplasmic segment spans residues 163–186 (STGLSCYSRFLELQKPRLCKLLRV). Residues 187-207 (LAFAYPYTWDSLPIFYRLFLF) traverse the membrane as a helical segment. Over 208–253 (PGESSRNEAMLYHQKHMGMTLLASFFYSAHLPERLAPGRFDYIGHS) the chain is Extracellular. Residues 254–274 (HQLFHVCVILATHLQMEAILL) traverse the membrane as a helical segment. The Cytoplasmic segment spans residues 275–294 (DKTLRREWLLATSRPFSFPQ). Residues 295-315 (IAAAMLLCIIFSLSNIIYFSA) traverse the membrane as a helical segment. Residues 316–330 (ALYRIPEPELHEKET) lie on the Extracellular side of the membrane.

The protein belongs to the ADIPOR family.

Its subcellular location is the cell membrane. Its function is as follows. Plasma membrane progesterone (P4) receptor coupled to G proteins. Seems to act through a G(i) mediated pathway. May be involved in oocyte maturation. The polypeptide is Membrane progestin receptor gamma (Mus musculus (Mouse)).